The sequence spans 300 residues: MTLSRDAAIQVAQVLSEALPYIRRFVGKTLVIKYGGNAMESDELKTGFARDIVLMKAVGIHPVVVHGGGPQIGDLLKRLSIESRFVDGMRVTDAQTMDVVEMVLGGQVNKDIVNLINRHGGSAIGLTGKDAGLIRAKKLKVTRQTPEMTQPEIIDIGQVGEVESVNTELLNMLVQGDFIPVIAPIGVGADGESYNINADLVAGKVAEALKAEKLMLLTNIAGLMDKEGRVLTGLSTEQVDALIADGTIYGGMLPKIRCALDAVQGGVTSAHIIDGRVPNAVLLEIFTDTGVGTLITNRQG.

Residues 68-69 (GG), arginine 90, and asparagine 195 each bind substrate.

This sequence belongs to the acetylglutamate kinase family. ArgB subfamily.

Its subcellular location is the cytoplasm. The enzyme catalyses N-acetyl-L-glutamate + ATP = N-acetyl-L-glutamyl 5-phosphate + ADP. The protein operates within amino-acid biosynthesis; L-arginine biosynthesis; N(2)-acetyl-L-ornithine from L-glutamate: step 2/4. In terms of biological role, catalyzes the ATP-dependent phosphorylation of N-acetyl-L-glutamate. The sequence is that of Acetylglutamate kinase from Azotobacter vinelandii (strain DJ / ATCC BAA-1303).